The primary structure comprises 542 residues: Peptide chain release factor 3 (542 aa).

The tr-type G domain maps to 14 to 283 (ERRRNFAIIS…AFLDYALKPA (270 aa)). GTP contacts are provided by residues 23 to 30 (SHPDAGKT), 91 to 95 (DTPGH), and 145 to 148 (NKLD).

This sequence belongs to the TRAFAC class translation factor GTPase superfamily. Classic translation factor GTPase family. PrfC subfamily.

The protein resides in the cytoplasm. Functionally, increases the formation of ribosomal termination complexes and stimulates activities of RF-1 and RF-2. It binds guanine nucleotides and has strong preference for UGA stop codons. It may interact directly with the ribosome. The stimulation of RF-1 and RF-2 is significantly reduced by GTP and GDP, but not by GMP. The polypeptide is Peptide chain release factor 3 (Cyanothece sp. (strain PCC 7425 / ATCC 29141)).